The chain runs to 318 residues: Probable carboxylesterase 1 (318 aa).

Residue Met1 is modified to N-acetylmethionine. Residues 79-81 (HGG) carry the Involved in the stabilization of the negatively charged intermediate by the formation of the oxyanion hole motif. Catalysis depends on residues Ser163, Asp258, and His290.

This sequence belongs to the 'GDXG' lipolytic enzyme family. Expressed in roots, stems, flowers and siliques.

The enzyme catalyses a carboxylic ester + H2O = an alcohol + a carboxylate + H(+). Functionally, carboxylesterase acting on esters with varying acyl chain length. This chain is Probable carboxylesterase 1 (CXE1), found in Arabidopsis thaliana (Mouse-ear cress).